Consider the following 304-residue polypeptide: Non-specific ribonucleoside hydrolase RihC (304 aa).

Residue His233 is part of the active site.

Belongs to the IUNH family. RihC subfamily.

Hydrolyzes both purine and pyrimidine ribonucleosides with a broad-substrate specificity. The protein is Non-specific ribonucleoside hydrolase RihC of Escherichia coli O17:K52:H18 (strain UMN026 / ExPEC).